We begin with the raw amino-acid sequence, 248 residues long: 14-3-3 protein zeta (248 aa).

This sequence belongs to the 14-3-3 family. As to quaternary structure, homodimer.

It is found in the cytoplasm. In terms of biological role, adapter protein implicated in the regulation of a large spectrum of both general and specialized signaling pathways. Binds to a large number of partners, usually by recognition of a phosphoserine or phosphothreonine motif. Binding generally results in the modulation of the activity of the binding partner. The protein is 14-3-3 protein zeta (14-3-3zeta) of Aedes aegypti (Yellowfever mosquito).